Here is a 539-residue protein sequence, read N- to C-terminus: Phenylalanine--tRNA ligase beta subunit (539 aa).

A B5 domain is found at leucine 271 to alanine 347. Mg(2+) is bound by residues aspartate 325, aspartate 331, glutamate 334, and aspartate 335.

It belongs to the phenylalanyl-tRNA synthetase beta subunit family. Type 2 subfamily. In terms of assembly, tetramer of two alpha and two beta subunits. It depends on Mg(2+) as a cofactor.

The protein localises to the cytoplasm. The catalysed reaction is tRNA(Phe) + L-phenylalanine + ATP = L-phenylalanyl-tRNA(Phe) + AMP + diphosphate + H(+). The protein is Phenylalanine--tRNA ligase beta subunit of Methanothrix thermoacetophila (strain DSM 6194 / JCM 14653 / NBRC 101360 / PT) (Methanosaeta thermophila).